The following is a 222-amino-acid chain: UPF0758 protein YE0063 (222 aa).

The 123-residue stretch at 100 to 222 folds into the MPN domain; the sequence is VLQNPEITQK…CVSFAERGWL (123 aa). Zn(2+) contacts are provided by histidine 171, histidine 173, and aspartate 184. The short motif at 171-184 is the JAMM motif element; that stretch reads HNHPSGKAEPSQAD.

This sequence belongs to the UPF0758 family. YicR subfamily.

The protein is UPF0758 protein YE0063 of Yersinia enterocolitica serotype O:8 / biotype 1B (strain NCTC 13174 / 8081).